We begin with the raw amino-acid sequence, 437 residues long: UDP-N-acetylmuramate--L-alanine ligase (437 aa).

Residue 108 to 114 (GAHGKTS) participates in ATP binding.

It belongs to the MurCDEF family.

The protein localises to the cytoplasm. The catalysed reaction is UDP-N-acetyl-alpha-D-muramate + L-alanine + ATP = UDP-N-acetyl-alpha-D-muramoyl-L-alanine + ADP + phosphate + H(+). It participates in cell wall biogenesis; peptidoglycan biosynthesis. In terms of biological role, cell wall formation. The chain is UDP-N-acetylmuramate--L-alanine ligase from Staphylococcus haemolyticus (strain JCSC1435).